The following is a 284-amino-acid chain: Type II methyltransferase M1.DpnII (284 aa).

7 residues coordinate S-adenosyl-L-methionine: tryptophan 17, lysine 21, glycine 46, aspartate 62, aspartate 177, phenylalanine 178, and aspartate 194.

The protein belongs to the N(4)/N(6)-methyltransferase family. In terms of assembly, monomer. Homodimer.

It carries out the reaction a 2'-deoxyadenosine in DNA + S-adenosyl-L-methionine = an N(6)-methyl-2'-deoxyadenosine in DNA + S-adenosyl-L-homocysteine + H(+). In terms of biological role, an alpha subtype methylase that recognizes the double-stranded sequence 5'-GATC-3', methylates A-2 on both strands, and protects the DNA from cleavage by the DpnII endonuclease. This is Type II methyltransferase M1.DpnII from Streptococcus pneumoniae.